A 215-amino-acid polypeptide reads, in one-letter code: Fanconi anemia core complex-associated protein 24 (215 aa).

Belongs to the multisubunit FA complex composed of FANCA, FANCB, FANCC, FANCE, FANCF, FANCG, FANCL/PHF9, FANCM and FAAP24. Interacts with FANCM.

It localises to the nucleus. Functionally, plays a role in DNA repair through recruitment of the FA core complex to damaged DNA. Regulates FANCD2 monoubiquitination upon DNA damage. Induces chromosomal instability as well as hypersensitivity to DNA cross-linking agents, when repressed. Targets FANCM/FAAP24 complex to the DNA, preferentially to single strand DNA. This Bos taurus (Bovine) protein is Fanconi anemia core complex-associated protein 24.